A 125-amino-acid chain; its full sequence is Protein ApaG (125 aa).

The 125-residue stretch at 1-125 folds into the ApaG domain; that stretch reads MINAPRVCVQ…FRLAIPSLIH (125 aa).

The protein is Protein ApaG of Pectobacterium carotovorum subsp. carotovorum (strain PC1).